The sequence spans 226 residues: 7-cyano-7-deazaguanine synthase (226 aa).

Residue 10–20 participates in ATP binding; the sequence is LSGGLDSATAA. Residues Cys-191, Cys-199, Cys-202, and Cys-205 each coordinate Zn(2+).

This sequence belongs to the QueC family. The cofactor is Zn(2+).

It carries out the reaction 7-carboxy-7-deazaguanine + NH4(+) + ATP = 7-cyano-7-deazaguanine + ADP + phosphate + H2O + H(+). It functions in the pathway purine metabolism; 7-cyano-7-deazaguanine biosynthesis. Catalyzes the ATP-dependent conversion of 7-carboxy-7-deazaguanine (CDG) to 7-cyano-7-deazaguanine (preQ(0)). This chain is 7-cyano-7-deazaguanine synthase, found in Prochlorococcus marinus (strain MIT 9303).